Consider the following 262-residue polypeptide: Transmembrane protein 106A (262 aa).

Residues 95 to 115 (FVFLAVLICLVTSSFIVFFLF) form a helical membrane-spanning segment.

This sequence belongs to the TMEM106 family. In terms of tissue distribution, expressed in renal cells (at protein level). Expressed in epithelial cells.

The protein localises to the cell membrane. In terms of biological role, activates macrophages and polarizes them into M1-like macrophages through the activation of the MAPK and NF-kappaB signaling pathway. Upon activation, up-regulates the expression of CD80, CD86, CD69 and MHC II on macrophages, and induces the release of pro-inflammatory cytokines such as TNF, IL1B, IL6, CCL2 and nitric oxide. May play a role in inhibition of proliferation and migration. The sequence is that of Transmembrane protein 106A (TMEM106A) from Homo sapiens (Human).